Reading from the N-terminus, the 250-residue chain is 5-oxoprolinase subunit A (250 aa).

It belongs to the LamB/PxpA family. Forms a complex composed of PxpA, PxpB and PxpC.

It catalyses the reaction 5-oxo-L-proline + ATP + 2 H2O = L-glutamate + ADP + phosphate + H(+). Its function is as follows. Catalyzes the cleavage of 5-oxoproline to form L-glutamate coupled to the hydrolysis of ATP to ADP and inorganic phosphate. This chain is 5-oxoprolinase subunit A, found in Streptomyces coelicolor (strain ATCC BAA-471 / A3(2) / M145).